Consider the following 200-residue polypeptide: Large ribosomal subunit protein uL4 (200 aa).

Residues 38-68 (GRQGSKQQKTRSDVRGGGKRPWRQKGTGRAR) are disordered. The segment covering 54–65 (GGKRPWRQKGTG) has biased composition (basic residues).

It belongs to the universal ribosomal protein uL4 family. In terms of assembly, part of the 50S ribosomal subunit.

Its function is as follows. One of the primary rRNA binding proteins, this protein initially binds near the 5'-end of the 23S rRNA. It is important during the early stages of 50S assembly. It makes multiple contacts with different domains of the 23S rRNA in the assembled 50S subunit and ribosome. Functionally, forms part of the polypeptide exit tunnel. This Pseudomonas syringae pv. tomato (strain ATCC BAA-871 / DC3000) protein is Large ribosomal subunit protein uL4.